The primary structure comprises 201 residues: MVYSVGLTGNIASGKSTVAEFFSELGINVIYADKIAKELTSKDTPCYQDIILHFGSSVVLNNGELDRKHIRDIIFSNSNERLWLESLLHPVIRKKIEEQLIVCTSPYCLIEIPLLFNKHHYPYLQKVLLVIAPLESQLDRIVKRDHCTKKQALAILATQPNLEQRLEAADDVLINESGLSELKAKVNKLHQKYLREAKIKQ.

The DPCK domain occupies 4-201 (SVGLTGNIAS…KYLREAKIKQ (198 aa)). Position 12–17 (12–17 (ASGKST)) interacts with ATP.

The protein belongs to the CoaE family.

It is found in the cytoplasm. It catalyses the reaction 3'-dephospho-CoA + ATP = ADP + CoA + H(+). It functions in the pathway cofactor biosynthesis; coenzyme A biosynthesis; CoA from (R)-pantothenate: step 5/5. In terms of biological role, catalyzes the phosphorylation of the 3'-hydroxyl group of dephosphocoenzyme A to form coenzyme A. This chain is Dephospho-CoA kinase, found in Legionella pneumophila (strain Lens).